Reading from the N-terminus, the 377-residue chain is Phytanoyl-CoA hydroxylase-interacting protein-like (377 aa).

One can recognise a Fibronectin type-III domain in the interval 52 to 161; sequence VPQNIKISNI…EINEFCTADY (110 aa).

Belongs to the PHYHIP family.

Functionally, may play a role in the development of the central system. This Danio rerio (Zebrafish) protein is Phytanoyl-CoA hydroxylase-interacting protein-like (phyhipl).